Consider the following 424-residue polypeptide: 3-isopropylmalate dehydratase large subunit (424 aa).

3 residues coordinate [4Fe-4S] cluster: C299, C359, and C362.

Belongs to the aconitase/IPM isomerase family. LeuC type 2 subfamily. As to quaternary structure, heterodimer of LeuC and LeuD. [4Fe-4S] cluster is required as a cofactor.

The enzyme catalyses (2R,3S)-3-isopropylmalate = (2S)-2-isopropylmalate. It participates in amino-acid biosynthesis; L-leucine biosynthesis; L-leucine from 3-methyl-2-oxobutanoate: step 2/4. In terms of biological role, catalyzes the isomerization between 2-isopropylmalate and 3-isopropylmalate, via the formation of 2-isopropylmaleate. The sequence is that of 3-isopropylmalate dehydratase large subunit from Hydrogenobaculum sp. (strain Y04AAS1).